The following is an 877-amino-acid chain: Alanine--tRNA ligase (877 aa).

Residues H567, H571, C669, and H673 each coordinate Zn(2+).

The protein belongs to the class-II aminoacyl-tRNA synthetase family. The cofactor is Zn(2+).

It is found in the cytoplasm. It catalyses the reaction tRNA(Ala) + L-alanine + ATP = L-alanyl-tRNA(Ala) + AMP + diphosphate. Its function is as follows. Catalyzes the attachment of alanine to tRNA(Ala) in a two-step reaction: alanine is first activated by ATP to form Ala-AMP and then transferred to the acceptor end of tRNA(Ala). Also edits incorrectly charged Ser-tRNA(Ala) and Gly-tRNA(Ala) via its editing domain. This Rickettsia rickettsii (strain Iowa) protein is Alanine--tRNA ligase.